The following is an 85-amino-acid chain: Toxin BmKaIT1 (85 aa).

The first 19 residues, 1–19, serve as a signal peptide directing secretion; sequence MNYLVMISFAFLLMTGVES. An LCN-type CS-alpha/beta domain is found at 21–83; the sequence is RDAYIAQNYN…VPIRVPGKCH (63 aa). 4 disulfide bridges follow: Cys31–Cys82, Cys35–Cys55, Cys41–Cys65, and Cys45–Cys67. Residues 84 to 85 constitute a propeptide, removed by a carboxypeptidase; the sequence is RR.

It belongs to the long (4 C-C) scorpion toxin superfamily. Sodium channel inhibitor family. Alpha subfamily. In terms of tissue distribution, expressed by the venom gland.

It localises to the secreted. In terms of biological role, alpha toxins bind voltage-independently at site-3 of sodium channels (Nav) and inhibit the inactivation of the activated channels, thereby blocking neuronal transmission. Shows a high toxicity toward insects and moderate toxicity against mammals. This chain is Toxin BmKaIT1, found in Olivierus martensii (Manchurian scorpion).